The sequence spans 1238 residues: Multifunctional 2-oxoglutarate metabolism enzyme (1238 aa).

Residues 1-41 form a 2-oxoglutarate dehydrogenase E1, N-terminal part region; the sequence is MANISSPFGQNEWLVEEMYRKFRDDPSSVDPSWHEFLVDYN. A linker region spans residues 42 to 97; that stretch reads PESTAEPVLTDPTSTDKQPSATPQAKPAAAADPVASRAKPATTPTVANGTAAGSAA. The segment at 44 to 108 is disordered; sequence STAEPVLTDP…PAKTTTTPPI (65 aa). Over residues 59–107 the composition is skewed to low complexity; that stretch reads QPSATPQAKPAAAADPVASRAKPATTPTVANGTAAGSAAAPAKTTTTPP. The interval 98–346 is succinyltransferase E2; that stretch reads APAKTTTTPP…LRTIHEMVLS (249 aa). The active-site Proton acceptor; for succinyltransferase activity is the H325. A 2-oxoglutarate dehydrogenase E1, C-terminal part region spans residues 347-1238; sequence DSFWDEIFRE…QQEILDTAFG (892 aa). R551 contacts thiamine diphosphate. 2-oxoglutarate-binding residues include H590 and S615. S615, L617, D657, A658, A659, and N690 together coordinate thiamine diphosphate. D657 is a Mg(2+) binding site. Mg(2+)-binding residues include N690 and I692. Positions 795–825 form a coiled coil; it reads DISLKEAEDALRDYQGQLERVFNEVRDLEKH. H1032 contributes to the 2-oxoglutarate binding site. The acetyl-CoA site is built by T1050, R1066, K1101, S1104, Q1154, R1161, and R1162.

It belongs to the 2-oxoacid dehydrogenase family. Kgd subfamily. As to quaternary structure, homodimer. The 2-oxoglutarate dehydrogenase (ODH) complex contains multiple copies of three enzymatic components: 2-oxoglutarate dehydrogenase (E1), dihydrolipoamide succinyltransferase (E2) and lipoamide dehydrogenase (E3). Mg(2+) is required as a cofactor. The cofactor is thiamine diphosphate.

The catalysed reaction is glyoxylate + 2-oxoglutarate + H(+) = 2-hydroxy-3-oxoadipate + CO2. It catalyses the reaction 2-oxoglutarate + H(+) = succinate semialdehyde + CO2. It carries out the reaction N(6)-[(R)-lipoyl]-L-lysyl-[protein] + 2-oxoglutarate + H(+) = N(6)-[(R)-S(8)-succinyldihydrolipoyl]-L-lysyl-[protein] + CO2. The enzyme catalyses N(6)-[(R)-dihydrolipoyl]-L-lysyl-[protein] + succinyl-CoA = N(6)-[(R)-S(8)-succinyldihydrolipoyl]-L-lysyl-[protein] + CoA. The protein operates within carbohydrate metabolism; tricarboxylic acid cycle; succinate from 2-oxoglutarate (transferase route): step 1/2. It functions in the pathway carbohydrate metabolism; tricarboxylic acid cycle; succinyl-CoA from 2-oxoglutarate (dehydrogenase route): step 1/1. Alpha-ketoglutarate dehydrogenase and decarboxylase activities are inhibited by unphosphorylated GarA, and allosterically activated by acetyl-CoA, the main substrate of the TCA cycle. Shows three enzymatic activities that share a first common step, the attack of thiamine-PP on 2-oxoglutarate (alpha-ketoglutarate, KG), leading to the formation of an enamine-thiamine-PP intermediate upon decarboxylation. Thus, displays KGD activity, catalyzing the decarboxylation from five-carbon 2-oxoglutarate to four-carbon succinate semialdehyde (SSA). Also catalyzes C-C bond formation between the activated aldehyde formed after decarboxylation of alpha-ketoglutarate and the carbonyl of glyoxylate (GLX), to yield 2-hydroxy-3-oxoadipate (HOA), which spontaneously decarboxylates to form 5-hydroxylevulinate (HLA). And is also a component of the 2-oxoglutarate dehydrogenase (ODH) complex, that catalyzes the overall conversion of 2-oxoglutarate to succinyl-CoA and CO(2). The KG decarboxylase and KG dehydrogenase reactions provide two alternative, tightly regulated, pathways connecting the oxidative and reductive branches of the TCA cycle. In Mycobacterium leprae (strain TN), this protein is Multifunctional 2-oxoglutarate metabolism enzyme (kgd).